The chain runs to 148 residues: Putative lysozyme C-2 (148 aa).

The first 18 residues, 1–18, serve as a signal peptide directing secretion; that stretch reads MKALLVLGFLLLSASVQA. Residues 19–148 enclose the C-type lysozyme domain; that stretch reads KVFKHCELAR…LSGYIRNCGV (130 aa). 4 disulfide bridges follow: C24–C146, C48–C134, C83–C99, and C95–C113. Catalysis depends on residues E53 and D71.

The protein belongs to the glycosyl hydrolase 22 family. Monomer.

The protein localises to the secreted. The catalysed reaction is Hydrolysis of (1-&gt;4)-beta-linkages between N-acetylmuramic acid and N-acetyl-D-glucosamine residues in a peptidoglycan and between N-acetyl-D-glucosamine residues in chitodextrins.. Functionally, lysozymes have primarily a bacteriolytic function; those in tissues and body fluids are associated with the monocyte-macrophage system and enhance the activity of immunoagents. In the intestine they may also have a digestive function. The sequence is that of Putative lysozyme C-2 (Lyz2) from Rattus norvegicus (Rat).